Here is a 285-residue protein sequence, read N- to C-terminus: Extracellular metalloprotease SMAC_06893 (285 aa).

The first 18 residues, 1-18, serve as a signal peptide directing secretion; it reads MQIKSLLLAAAAAPAALG. Zn(2+) is bound at residue H197. The active site involves E198. Residue H201 coordinates Zn(2+). A disulfide bridge connects residues C233 and C260. N282 is a glycosylation site (N-linked (GlcNAc...) asparagine).

Belongs to the peptidase M43B family.

The protein resides in the secreted. In terms of biological role, secreted metalloproteinase that allows assimilation of proteinaceous substrates. This is Extracellular metalloprotease SMAC_06893 from Sordaria macrospora (strain ATCC MYA-333 / DSM 997 / K(L3346) / K-hell).